Here is a 249-residue protein sequence, read N- to C-terminus: 5'-nucleotidase SurE (249 aa).

A divalent metal cation is bound by residues D8, D9, S39, and N91.

It belongs to the SurE nucleotidase family. The cofactor is a divalent metal cation.

Its subcellular location is the cytoplasm. It carries out the reaction a ribonucleoside 5'-phosphate + H2O = a ribonucleoside + phosphate. Its function is as follows. Nucleotidase that shows phosphatase activity on nucleoside 5'-monophosphates. The protein is 5'-nucleotidase SurE of Pseudomonas aeruginosa (strain LESB58).